A 475-amino-acid chain; its full sequence is MAAATVLGRLSLIPNLSSKPKLKSNRRTTSTSVSVRAQASFSDPFVLQLAESLEDSLSASPSSSLPLQRIRDSSAETLLSTPWPSRKDEPFRFTDTSLIRSSQIEPISTQQRNSEILDNLTETQFTNAVIIDGFVSNLTIGPSDLPDGVYFGKYSGLPDELTNRISEFIGNFDSGDLFWSINGMGAPDLMVIYVPEGCKVENPIYLRYFSGETGDRESKRLPVSNPRVFVLVEEGGEIGIVEEFVGKDEEGFYWTNPVLEVVVQKNAKLKHSYLQKESMASAHIKWTFVRQEAESEYELVEVSTGGKLGRHNVHVQQLGPDTLTELTTFHMCVNEQTLDLHSKIILDHPRGASRQLHKCIVAHSSGQAVFDGNVRVNRFAQQTNAGQLTRSLLLKPRATVNIKPNLQIIADDVKCSHGAAISDLEEDQLFYFQARGIDLETARRALISSFGSEVIEKFPNREIRDQARNHVKGLL.

The N-terminal 36 residues, 1-36 (MAAATVLGRLSLIPNLSSKPKLKSNRRTTSTSVSVR), are a transit peptide targeting the chloroplast.

In terms of assembly, interacts with NAP7.

Its subcellular location is the plastid. The protein localises to the chloroplast. This is Protein ABCI7, chloroplastic (ABCI7) from Arabidopsis thaliana (Mouse-ear cress).